The following is a 427-amino-acid chain: Glucose-1-phosphate adenylyltransferase (427 aa).

Residues Tyr-112, Gly-177, Glu-192 to Lys-193, and Ser-210 contribute to the alpha-D-glucose 1-phosphate site.

This sequence belongs to the bacterial/plant glucose-1-phosphate adenylyltransferase family. As to quaternary structure, homotetramer.

The catalysed reaction is alpha-D-glucose 1-phosphate + ATP + H(+) = ADP-alpha-D-glucose + diphosphate. Its pathway is glycan biosynthesis; glycogen biosynthesis. In terms of biological role, involved in the biosynthesis of ADP-glucose, a building block required for the elongation reactions to produce glycogen. Catalyzes the reaction between ATP and alpha-D-glucose 1-phosphate (G1P) to produce pyrophosphate and ADP-Glc. The sequence is that of Glucose-1-phosphate adenylyltransferase from Methylobacillus flagellatus (strain ATCC 51484 / DSM 6875 / VKM B-1610 / KT).